The chain runs to 425 residues: Protein CLP1 homolog (425 aa).

Residues E18, K59, and 121–126 contribute to the ATP site; that span reads DVGKST.

It belongs to the Clp1 family. Clp1 subfamily.

Its subcellular location is the nucleus. Its function is as follows. Required for endonucleolytic cleavage during polyadenylation-dependent pre-mRNA 3'-end formation. The protein is Protein CLP1 homolog (cbc) of Drosophila persimilis (Fruit fly).